We begin with the raw amino-acid sequence, 333 residues long: DNA-directed RNA polymerase subunit alpha (333 aa).

Residues Met1–Lys234 are alpha N-terminal domain (alpha-NTD). The interval Ile248 to Ala333 is alpha C-terminal domain (alpha-CTD).

The protein belongs to the RNA polymerase alpha chain family. In terms of assembly, homodimer. The RNAP catalytic core consists of 2 alpha, 1 beta, 1 beta' and 1 omega subunit. When a sigma factor is associated with the core the holoenzyme is formed, which can initiate transcription.

The enzyme catalyses RNA(n) + a ribonucleoside 5'-triphosphate = RNA(n+1) + diphosphate. In terms of biological role, DNA-dependent RNA polymerase catalyzes the transcription of DNA into RNA using the four ribonucleoside triphosphates as substrates. The sequence is that of DNA-directed RNA polymerase subunit alpha from Pseudomonas fluorescens (strain Pf0-1).